The following is a 362-amino-acid chain: Myricetin 3'-O-methyltransferase 4 (362 aa).

Residue Asp229 participates in S-adenosyl-L-methionine binding. His267 (proton acceptor) is an active-site residue.

Belongs to the class I-like SAM-binding methyltransferase superfamily. Cation-independent O-methyltransferase family. Homodimer. As to expression, mainly expressed in stem and petiole trichomes.

The catalysed reaction is myricetin + S-adenosyl-L-methionine = laricitrin + S-adenosyl-L-homocysteine + H(+). It functions in the pathway flavonoid metabolism. In terms of biological role, flavonoid 3'-O-methyltransferase involved in the biosynthesis of polymethoxylated flavonoids natural products such as myricetin derivatives, aroma compounds possessing antioxidant properties and exhibiting pharmacological activities such as anti-carcinogen, anti-viral, anti-thrombotic, anti-diabetic, anti-atherosclerotic, and anti-inflammatory effects. Catalyzes S-adenosylmethionine-dependent regioselective 3'-O-methylation of flavonoids; active on various hydroxylated flavonoid substrates, including myricetin, thus producing 3'-methyl myricetin (laricitrin). In Solanum lycopersicum (Tomato), this protein is Myricetin 3'-O-methyltransferase 4.